The sequence spans 210 residues: Thymidylate kinase (210 aa).

10–17 (GPEGAGKS) serves as a coordination point for ATP.

The protein belongs to the thymidylate kinase family.

It carries out the reaction dTMP + ATP = dTDP + ADP. Functionally, phosphorylation of dTMP to form dTDP in both de novo and salvage pathways of dTTP synthesis. The protein is Thymidylate kinase of Pseudomonas putida (strain ATCC 700007 / DSM 6899 / JCM 31910 / BCRC 17059 / LMG 24140 / F1).